Reading from the N-terminus, the 517-residue chain is MATHNKKRLNLKDKYRYLTRDLAWETTYQKKEDVFPLEHFEGIKITDWDKWEDPFRLTMDTYWKYQAEKEKKLYAIFDAFAQNNGHQNISDARYVNALKLFLTAVSPLEYQAFQGFSRVGRQFSGAGARVACQMQAIDELRHVQTQVHAMSHYNKHFDGLHDFAHMYDRVWYLSVPKSYMDDARTAGPFEFLTAVSFSFEYVLTNLLFVPFMSGAAYNGDMATVTFGFSAQSDEARHMTLGLEVIKFMLEQHEDNVPIIQRWIDKWFWRGYRLLTLIGMMMDYMLPNKVMSWSEAWGVYFEQAGGALFKDLERYGIRPPKYVEQTTIGKEHITHQVWGALYQYSKATSFHTWIPGDEELNWLSEKYPDTFDKYYRPRFEFWREQQAKGERFYNDTLPHLCQVCQLPVIFTEPDDPTKLSLRSLVHEGERYQFCSDGCCDIFKNEPVKYIQAWLPVHQIYQGNCEGGDVETVVQKYYHIKSGVDNLEYLGSPEHQRWLALKGQTPPTAAPADKSLGAA.

Residues Glu109, Glu139, His142, Glu200, Glu234, and His237 each contribute to the Fe cation site.

It belongs to the TmoA/XamoA family. In terms of assembly, the multicomponent enzyme phenol hydroxylase is formed by DmpL (P1 component), DmpM (P2 component), DmpN (P3 component), DmpO (P4 component) and DmpP (P5 component). The oxygenase component is a dimer composed of three subunits, DmpL, DmpN and DmpO (DmpLNO). DmpN interacts with the auxiliary protein DmpK (P0 component). It depends on Fe(2+) as a cofactor.

It carries out the reaction phenol + NADH + O2 + H(+) = catechol + NAD(+) + H2O. It functions in the pathway aromatic compound metabolism; phenol degradation. With respect to regulation, requires DmpM for efficient turnover. The activity of DmpLNO oxygenase is inhibited by dithiothreitol (DTT) by a mechanism apparently involving H(2)O(2) generation. Part of a multicomponent enzyme which catalyzes the degradation of phenol and some of its methylated derivatives. DmpL, DmpN and DmpO form the oxygenase component of the complex. Required for growth on phenol and for in vitro phenol hydroxylase activity. In Pseudomonas sp. (strain CF600), this protein is Phenol 2-monooxygenase, oxygenase component DmpN.